Reading from the N-terminus, the 341-residue chain is L-threonine 3-dehydrogenase (341 aa).

A Zn(2+)-binding site is contributed by Cys38. Active-site charge relay system residues include Thr40 and His43. Zn(2+)-binding residues include His63, Glu64, Cys93, Cys96, Cys99, and Cys107. NAD(+) is bound by residues Ile175, Asp195, Arg200, 262-264 (LGI), and 286-287 (IY).

The protein belongs to the zinc-containing alcohol dehydrogenase family. As to quaternary structure, homotetramer. Zn(2+) serves as cofactor.

Its subcellular location is the cytoplasm. The catalysed reaction is L-threonine + NAD(+) = (2S)-2-amino-3-oxobutanoate + NADH + H(+). Its pathway is amino-acid degradation; L-threonine degradation via oxydo-reductase pathway; glycine from L-threonine: step 1/2. In terms of biological role, catalyzes the NAD(+)-dependent oxidation of L-threonine to 2-amino-3-ketobutyrate. This Shigella sonnei (strain Ss046) protein is L-threonine 3-dehydrogenase.